The chain runs to 513 residues: Glutamyl-tRNA(Gln) amidotransferase subunit B, mitochondrial (513 aa).

This sequence belongs to the GatB/GatE family. GatB subfamily. In terms of assembly, subunit of the heterotrimeric GatFAB amidotransferase (AdT) complex, composed of A, B and F subunits.

Its subcellular location is the mitochondrion. The enzyme catalyses L-glutamyl-tRNA(Gln) + L-glutamine + ATP + H2O = L-glutaminyl-tRNA(Gln) + L-glutamate + ADP + phosphate + H(+). Its function is as follows. Allows the formation of correctly charged Gln-tRNA(Gln) through the transamidation of misacylated Glu-tRNA(Gln) in the mitochondria. The reaction takes place in the presence of glutamine and ATP through an activated gamma-phospho-Glu-tRNA(Gln). This is Glutamyl-tRNA(Gln) amidotransferase subunit B, mitochondrial from Debaryomyces hansenii (strain ATCC 36239 / CBS 767 / BCRC 21394 / JCM 1990 / NBRC 0083 / IGC 2968) (Yeast).